The chain runs to 501 residues: MEPGPSVSPGPSRSFKEELLCAVCYDPFRDAVTLRCGHNFCRRCVSGCWEVQTTPSCPVCKERAVPGELRTNHTLNNLVETLLREEAEGARWTGRRSPRPCRAHRAPLTLFCVEDKELLCCACQADARHQEHRVQPIKDTAQDFRAKCKNMEHVLREKAKSFWALRRTYEAIAKHNEVQTTWLEGRIRDEFDKLRDFLRVEEQATVDAMKEESRKKHLLAEEKMKQLAEQTEALAREIERLQMEMKEDDMTFLMKHKSRKRRLFCTVEPAPLQPGLLMDACKYLESLQYRVWKKMLGSVESVPFSLDPNTAAGWLKVADDLTSVINHGYRVQVENPERFSSAPCLLGSQVFSKGSHSWEVDVGGLPSWRVGVVRVQAHAQAQAQADVGGEGHSHSCYHDTRSGFWYLCRTQGVDGDHCMTSDTATAPLVQAMPRRLRVELECEEGELSFYDSERHCHLYTFHAHFGEVRPYFYLGASRGDGPPEPLRICHLRVSIKEELDI.

Position 1 is an N-acetylmethionine (Met-1). Ser-8 is subject to Phosphoserine. Residues Cys-21–Lys-61 form an RING-type zinc finger. A B box-type zinc finger spans residues Arg-96–Ile-137. Positions 101, 104, 123, and 129 each coordinate Zn(2+). Positions Met-209–Phe-252 form a coiled coil. The B30.2/SPRY domain occupies Leu-284 to Ile-495.

Interacts with PKM isoform M2, but not isoform M1; this interaction may compete with that between PKM and FGFR1, and hence reduces FGFR1-dependent tyrosine phosphorylation of PKM. Interacts with IRF7; this interaction promotes IRF7 proteasomal degradation. Interacts with TRAF3; this interaction promotes TRAF3 activation.

It localises to the cytoplasm. The protein resides in the nucleus. It carries out the reaction S-ubiquitinyl-[E2 ubiquitin-conjugating enzyme]-L-cysteine + [acceptor protein]-L-lysine = [E2 ubiquitin-conjugating enzyme]-L-cysteine + N(6)-ubiquitinyl-[acceptor protein]-L-lysine.. The protein operates within protein modification; protein ubiquitination. In terms of biological role, E3 ubiquitin-protein ligase that participates in multiple biological processes including cell death, glucose metabolism, and in particular, the innate immune response. Mediates 'Lys-63'-linked polyubiquitination of TRAF3 thereby promoting type I interferon production via RIG-I signaling pathway. Can also catalyze 'Lys-48'-linked polyubiquitination and proteasomal degradation of viral proteins such as influenza virus PB2. Acts as a negative feedback regulator of TLR7- and TLR9-triggered signaling. Mechanistically, promotes the 'Lys-48'-linked ubiquitination of IRF7 and induces its degradation via a proteasome-dependent pathway. Reduces FGFR1-dependent tyrosine phosphorylation of PKM, inhibiting PKM-dependent lactate production, glucose metabolism, and cell growth. This is E3 ubiquitin-protein ligase TRIM35 (Trim35) from Rattus norvegicus (Rat).